We begin with the raw amino-acid sequence, 469 residues long: Neuraminidase (469 aa).

The Intravirion segment spans residues 1–9 (MNPNQKIMT). The chain crosses the membrane as a helical span at residues 10–30 (IGSVSLIIAAVCFLMQIAILV). Residues 11 to 33 (GSVSLIIAAVCFLMQIAILVTTV) form an involved in apical transport and lipid raft association region. Residues 31–469 (TTVTLHFKQC…DGANINFMPI (439 aa)) lie on the Virion surface side of the membrane. The interval 36–88 (HFKQCECDSPSNNQVKPCEPIIIERNITEIVYLNNTTIEKETCPKLVEYRNWS) is hypervariable stalk region. N-linked (GlcNAc...) asparagine; by host glycans are attached at residues Asn61, Asn69, Asn70, and Asn86. Positions 91–469 (QCKITGFAPF…DGANINFMPI (379 aa)) are head of neuraminidase. 8 disulfide bridges follow: Cys92–Cys417, Cys124–Cys129, Cys183–Cys230, Cys232–Cys237, Cys278–Cys291, Cys280–Cys289, Cys318–Cys337, and Cys421–Cys447. Residue Arg118 participates in substrate binding. A glycan (N-linked (GlcNAc...) asparagine; by host) is linked at Asn146. Asp151 functions as the Proton donor/acceptor in the catalytic mechanism. Arg152 is a binding site for substrate. 2 N-linked (GlcNAc...) asparagine; by host glycosylation sites follow: Asn200 and Asn234. Position 276-277 (276-277 (EE)) interacts with substrate. Arg292 provides a ligand contact to substrate. The Ca(2+) site is built by Asp293, Gly297, and Asp324. Residues 323–344 (GDTPRNDDRSSKSNCRNPNNEK) are disordered. The span at 334-343 (KSNCRNPNNE) shows a compositional bias: polar residues. Position 371 (Arg371) interacts with substrate. N-linked (GlcNAc...) asparagine; by host glycosylation occurs at Asn402. Tyr406 functions as the Nucleophile in the catalytic mechanism.

It belongs to the glycosyl hydrolase 34 family. Homotetramer. The cofactor is Ca(2+). Post-translationally, N-glycosylated.

Its subcellular location is the virion membrane. It localises to the host apical cell membrane. The catalysed reaction is Hydrolysis of alpha-(2-&gt;3)-, alpha-(2-&gt;6)-, alpha-(2-&gt;8)- glycosidic linkages of terminal sialic acid residues in oligosaccharides, glycoproteins, glycolipids, colominic acid and synthetic substrates.. With respect to regulation, inhibited by the neuraminidase inhibitors zanamivir (Relenza) and oseltamivir (Tamiflu). These drugs interfere with the release of progeny virus from infected cells and are effective against all influenza strains. Resistance to neuraminidase inhibitors is quite rare. Functionally, catalyzes the removal of terminal sialic acid residues from viral and cellular glycoconjugates. Cleaves off the terminal sialic acids on the glycosylated HA during virus budding to facilitate virus release. Additionally helps virus spread through the circulation by further removing sialic acids from the cell surface. These cleavages prevent self-aggregation and ensure the efficient spread of the progeny virus from cell to cell. Otherwise, infection would be limited to one round of replication. Described as a receptor-destroying enzyme because it cleaves a terminal sialic acid from the cellular receptors. May facilitate viral invasion of the upper airways by cleaving the sialic acid moieties on the mucin of the airway epithelial cells. Likely to plays a role in the budding process through its association with lipid rafts during intracellular transport. May additionally display a raft-association independent effect on budding. Plays a role in the determination of host range restriction on replication and virulence. Sialidase activity in late endosome/lysosome traffic seems to enhance virus replication. This Influenza A virus (strain A/Swine/Hong Kong/3/1976 H3N2) protein is Neuraminidase.